We begin with the raw amino-acid sequence, 267 residues long: Pyridoxine 5'-phosphate synthase (267 aa).

Asn-8 contributes to the 3-amino-2-oxopropyl phosphate binding site. Position 10–11 (10–11 (DH)) interacts with 1-deoxy-D-xylulose 5-phosphate. Position 19 (Arg-19) interacts with 3-amino-2-oxopropyl phosphate. The active-site Proton acceptor is His-44. Positions 46 and 51 each coordinate 1-deoxy-D-xylulose 5-phosphate. The active-site Proton acceptor is Glu-71. Thr-101 provides a ligand contact to 1-deoxy-D-xylulose 5-phosphate. His-219 functions as the Proton donor in the catalytic mechanism. Residues Gly-220 and 241-242 (GH) each bind 3-amino-2-oxopropyl phosphate.

This sequence belongs to the PNP synthase family. As to quaternary structure, homooctamer; tetramer of dimers.

Its subcellular location is the cytoplasm. The enzyme catalyses 3-amino-2-oxopropyl phosphate + 1-deoxy-D-xylulose 5-phosphate = pyridoxine 5'-phosphate + phosphate + 2 H2O + H(+). Its pathway is cofactor biosynthesis; pyridoxine 5'-phosphate biosynthesis; pyridoxine 5'-phosphate from D-erythrose 4-phosphate: step 5/5. Its function is as follows. Catalyzes the complicated ring closure reaction between the two acyclic compounds 1-deoxy-D-xylulose-5-phosphate (DXP) and 3-amino-2-oxopropyl phosphate (1-amino-acetone-3-phosphate or AAP) to form pyridoxine 5'-phosphate (PNP) and inorganic phosphate. The sequence is that of Pyridoxine 5'-phosphate synthase from Helicobacter hepaticus (strain ATCC 51449 / 3B1).